The primary structure comprises 450 residues: ATP-dependent protease ATPase subunit HslU (450 aa).

Residues Val-29, 71–76 (GVGKTE), Asp-261, Glu-328, and Arg-400 contribute to the ATP site.

It belongs to the ClpX chaperone family. HslU subfamily. In terms of assembly, a double ring-shaped homohexamer of HslV is capped on each side by a ring-shaped HslU homohexamer. The assembly of the HslU/HslV complex is dependent on binding of ATP.

It localises to the cytoplasm. Functionally, ATPase subunit of a proteasome-like degradation complex; this subunit has chaperone activity. The binding of ATP and its subsequent hydrolysis by HslU are essential for unfolding of protein substrates subsequently hydrolyzed by HslV. HslU recognizes the N-terminal part of its protein substrates and unfolds these before they are guided to HslV for hydrolysis. The protein is ATP-dependent protease ATPase subunit HslU of Rickettsia akari (strain Hartford).